The following is a 214-amino-acid chain: Heat shock 70 kDa protein cognate 1 (214 aa).

The protein belongs to the heat shock protein 70 family.

This is Heat shock 70 kDa protein cognate 1 (Hsc70-1) from Drosophila simulans (Fruit fly).